A 119-amino-acid chain; its full sequence is Large ribosomal subunit protein bL20 (119 aa).

The protein belongs to the bacterial ribosomal protein bL20 family.

Its function is as follows. Binds directly to 23S ribosomal RNA and is necessary for the in vitro assembly process of the 50S ribosomal subunit. It is not involved in the protein synthesizing functions of that subunit. The chain is Large ribosomal subunit protein bL20 from Stenotrophomonas maltophilia (strain R551-3).